Here is a 961-residue protein sequence, read N- to C-terminus: FYVE, RhoGEF and PH domain-containing protein 1 (961 aa).

Over residues 1–11 (MHGHRAPGGAG) the composition is skewed to gly residues. Positions 1–353 (MHGHRAPGGA…DEEEEEEKDR (353 aa)) are disordered. Over residues 27–38 (PPACADSDPGAS) the composition is skewed to low complexity. Ser48 bears the Phosphoserine mark. The segment covering 125–135 (PHPEGPQRLRS) has biased composition (basic and acidic residues). 2 stretches are compositionally biased toward pro residues: residues 156-165 (GPKPQVPPKP) and 172-190 (RMPP…PLPA). The short motif at 171-187 (PRMPPPLEPIPPPPSRP) is the SH3-binding element. The segment covering 199–213 (APRAEASPSSAAVSS) has biased composition (low complexity). Ser205 carries the post-translational modification Phosphoserine. The span at 231 to 255 (VPGPSPGPPEPVMLPQPTSQPPVPQ) shows a compositional bias: pro residues. Positions 273–284 (RDGEKVPNRDSG) are enriched in basic and acidic residues. 2 stretches are compositionally biased toward low complexity: residues 285-294 (IDSISSPSNS) and 316-325 (ALASVPVALA). Residues 335 to 351 (VDSDLEEEDDEEEEEEK) show a composition bias toward acidic residues. The region spanning 373–561 (KVFHIANELL…ATAAEHSNAA (189 aa)) is the DH domain. The PH 1 domain occupies 590 to 689 (ELIKEGHILK…WVQAINSTLL (100 aa)). The interval 702–726 (NSTNREDEDTPPNSPNVDLGKRAPT) is disordered. Thr711 carries the post-translational modification Phosphothreonine. The residue at position 715 (Ser715) is a Phosphoserine. An FYVE-type zinc finger spans residues 730–790 (EKEVTMCMRC…VCTDCYVALH (61 aa)). Zn(2+)-binding residues include Cys736, Cys739, Cys753, Cys756, Cys761, Cys764, Cys782, and Cys785. The region spanning 821-921 (NSVICSFLHY…WMAVLGRAGR (101 aa)) is the PH 2 domain. Residues 925–961 (FCPGPTLSEDREMEEAPVAALGATAEPPESPQTRDKT) form a disordered region.

As to quaternary structure, interacts with DBNL/ABP1 and CTTN. May interact with CCPG1. Binds CDC42. In terms of tissue distribution, expressed in fetal heart, brain, lung, kidney and placenta. Less expressed in liver; adult heart, brain, lung, pancreas and skeletal muscle.

The protein resides in the cytoplasm. Its subcellular location is the cell projection. It is found in the lamellipodium. The protein localises to the ruffle. It localises to the cytoskeleton. Functionally, activates CDC42, a member of the Ras-like family of Rho- and Rac proteins, by exchanging bound GDP for free GTP. Plays a role in regulating the actin cytoskeleton and cell shape. The protein is FYVE, RhoGEF and PH domain-containing protein 1 (FGD1) of Homo sapiens (Human).